Here is a 330-residue protein sequence, read N- to C-terminus: Ketol-acid reductoisomerase (NADP(+)) (330 aa).

Residues 2-182 form the KARI N-terminal Rossmann domain; the sequence is ARMYYDADAN…GGTRAGILET (181 aa). Residues 25–28, Ser-51, Ser-53, and 83–86 contribute to the NADP(+) site; these read YGSQ and DEFQ. His-108 is an active-site residue. Gly-134 is a binding site for NADP(+). One can recognise a KARI C-terminal knotted domain in the interval 183–328; sequence SFREETETDL…KDLRAMFSWL (146 aa). Positions 191, 195, 227, and 231 each coordinate Mg(2+). Residue Ser-252 coordinates substrate.

Belongs to the ketol-acid reductoisomerase family. The cofactor is Mg(2+).

The catalysed reaction is (2R)-2,3-dihydroxy-3-methylbutanoate + NADP(+) = (2S)-2-acetolactate + NADPH + H(+). It catalyses the reaction (2R,3R)-2,3-dihydroxy-3-methylpentanoate + NADP(+) = (S)-2-ethyl-2-hydroxy-3-oxobutanoate + NADPH + H(+). It functions in the pathway amino-acid biosynthesis; L-isoleucine biosynthesis; L-isoleucine from 2-oxobutanoate: step 2/4. It participates in amino-acid biosynthesis; L-valine biosynthesis; L-valine from pyruvate: step 2/4. Its function is as follows. Involved in the biosynthesis of branched-chain amino acids (BCAA). Catalyzes an alkyl-migration followed by a ketol-acid reduction of (S)-2-acetolactate (S2AL) to yield (R)-2,3-dihydroxy-isovalerate. In the isomerase reaction, S2AL is rearranged via a Mg-dependent methyl migration to produce 3-hydroxy-3-methyl-2-ketobutyrate (HMKB). In the reductase reaction, this 2-ketoacid undergoes a metal-dependent reduction by NADPH to yield (R)-2,3-dihydroxy-isovalerate. The sequence is that of Ketol-acid reductoisomerase (NADP(+)) from Synechococcus sp. (strain ATCC 27144 / PCC 6301 / SAUG 1402/1) (Anacystis nidulans).